A 258-amino-acid polypeptide reads, in one-letter code: MHMLFYKSYVREFIGEFLGTFVLMFLGEGATANFHTTGLSGDWYKLCLGWGLAVFFGILVSAKLSGAHLNLAVSIGLSSINKFDLKKIPVYFFAQLLGAFVGTSTVYGLYHGFISNSKIPQFAWETSRNPSISLTGAFFNELILTGILLLVILVVVDENICGKFHILKLSSVVGLIILCIGITFGGNTGFALNPSRDLGSRFLSLIAYGKDTFTKDNFYFWVPLVAPCVGSVVFCQFYDKVICPLVDLANNEKDGVDL.

Topologically, residues Met-1 to Arg-11 are cytoplasmic. A helical transmembrane segment spans residues Glu-12–Ala-32. The Extracellular segment spans residues Asn-33–Lys-45. A helical membrane pass occupies residues Leu-46–Gly-66. Glycerol contacts are provided by Gly-66, Ala-67, and Asn-70. Topologically, residues Ala-67–Lys-87 are cytoplasmic. The chain crosses the membrane as a helical span at residues Ile-88–Gly-108. Over Leu-109–Thr-135 the chain is Extracellular. Ser-127 is a binding site for glycerol. A helical transmembrane segment spans residues Gly-136–Val-156. Residues Asp-157 to Ser-171 are Cytoplasmic-facing. The helical transmembrane segment at Val-172–Leu-192 threads the bilayer. Glycerol-binding residues include Gly-189, Phe-190, Asn-193, and Arg-196. The Extracellular portion of the chain corresponds to Asn-193–Asn-217. Residues Phe-218–Tyr-238 traverse the membrane as a helical segment. Over Asp-239–Leu-258 the chain is Cytoplasmic.

Belongs to the MIP/aquaporin (TC 1.A.8) family. In terms of assembly, homotetramer.

The protein localises to the cell membrane. The catalysed reaction is H2O(in) = H2O(out). It carries out the reaction glycerol(in) = glycerol(out). It catalyses the reaction urea(in) = urea(out). The enzyme catalyses NH4(+)(in) = NH4(+)(out). The catalysed reaction is methylamine(out) = methylamine(in). It carries out the reaction formamide(out) = formamide(in). Mediates water and glycerol transport across the cell membrane. Permeable to sugar alcohols of up to five carbons and urea. Permeable to ammonia, methylamine and formamide. This chain is Aquaglyceroporin, found in Plasmodium falciparum (isolate 3D7).